Reading from the N-terminus, the 335-residue chain is Acetyl-coenzyme A carboxylase carboxyl transferase subunit alpha (335 aa).

The CoA carboxyltransferase C-terminal domain maps to 48 to 308 (TLELKVDALR…KEILIEELKA (261 aa)).

It belongs to the AccA family. In terms of assembly, acetyl-CoA carboxylase is a heterohexamer composed of biotin carboxyl carrier protein (AccB), biotin carboxylase (AccC) and two subunits each of ACCase subunit alpha (AccA) and ACCase subunit beta (AccD).

It localises to the cytoplasm. It carries out the reaction N(6)-carboxybiotinyl-L-lysyl-[protein] + acetyl-CoA = N(6)-biotinyl-L-lysyl-[protein] + malonyl-CoA. Its pathway is lipid metabolism; malonyl-CoA biosynthesis; malonyl-CoA from acetyl-CoA: step 1/1. Its function is as follows. Component of the acetyl coenzyme A carboxylase (ACC) complex. First, biotin carboxylase catalyzes the carboxylation of biotin on its carrier protein (BCCP) and then the CO(2) group is transferred by the carboxyltransferase to acetyl-CoA to form malonyl-CoA. The sequence is that of Acetyl-coenzyme A carboxylase carboxyl transferase subunit alpha from Pelodictyon phaeoclathratiforme (strain DSM 5477 / BU-1).